The following is a 186-amino-acid chain: NADH-quinone oxidoreductase subunit I (186 aa).

4Fe-4S ferredoxin-type domains follow at residues 70-100 and 113-142; these read LTTR…IQSA and DRFE…MSKD. Positions 80, 83, 86, 90, 122, 125, 128, and 132 each coordinate [4Fe-4S] cluster.

It belongs to the complex I 23 kDa subunit family. As to quaternary structure, NDH-1 is composed of 14 different subunits. Subunits NuoA, H, J, K, L, M, N constitute the membrane sector of the complex. [4Fe-4S] cluster is required as a cofactor.

It is found in the cell inner membrane. The catalysed reaction is a quinone + NADH + 5 H(+)(in) = a quinol + NAD(+) + 4 H(+)(out). In terms of biological role, NDH-1 shuttles electrons from NADH, via FMN and iron-sulfur (Fe-S) centers, to quinones in the respiratory chain. The immediate electron acceptor for the enzyme in this species is believed to be ubiquinone. Couples the redox reaction to proton translocation (for every two electrons transferred, four hydrogen ions are translocated across the cytoplasmic membrane), and thus conserves the redox energy in a proton gradient. The sequence is that of NADH-quinone oxidoreductase subunit I from Pelobacter propionicus (strain DSM 2379 / NBRC 103807 / OttBd1).